The following is a 479-amino-acid chain: Serine carboxypeptidase-like 29 (479 aa).

The N-terminal stretch at 1–28 is a signal peptide; that stretch reads MAKTRGSCCLVNALIAIAFLATAHLCEA. N-linked (GlcNAc...) asparagine glycans are attached at residues N47 and N144. Cystine bridges form between C93–C349, C254–C266, and C290–C317. S186 is a catalytic residue. N-linked (GlcNAc...) asparagine glycosylation occurs at N293. Active-site residues include D386 and H438.

It belongs to the peptidase S10 family. As to expression, expressed in seedlings, roots, leaves and flowers.

The protein resides in the secreted. In terms of biological role, probable carboxypeptidase. In Arabidopsis thaliana (Mouse-ear cress), this protein is Serine carboxypeptidase-like 29 (SCPL29).